Reading from the N-terminus, the 359-residue chain is Fructose-bisphosphate aldolase 1 (359 aa).

Residue Ser-50 coordinates D-glyceraldehyde 3-phosphate. The active-site Proton donor is the Asp-83. Residues His-84, Asp-105, Glu-142, and His-198 each contribute to the Zn(2+) site. Dihydroxyacetone phosphate is bound at residue Gly-199. Residue His-232 coordinates Zn(2+). Dihydroxyacetone phosphate contacts are provided by residues 233-235 and 275-278; these read GSS and NIDT.

Belongs to the class II fructose-bisphosphate aldolase family. As to quaternary structure, homodimer. Zn(2+) serves as cofactor.

The catalysed reaction is beta-D-fructose 1,6-bisphosphate = D-glyceraldehyde 3-phosphate + dihydroxyacetone phosphate. It participates in carbohydrate biosynthesis; Calvin cycle. Its pathway is carbohydrate degradation; glycolysis; D-glyceraldehyde 3-phosphate and glycerone phosphate from D-glucose: step 4/4. In terms of biological role, catalyzes the aldol condensation of dihydroxyacetone phosphate (DHAP or glycerone-phosphate) with glyceraldehyde 3-phosphate (G3P) to form fructose 1,6-bisphosphate (FBP) in gluconeogenesis and the reverse reaction in glycolysis. In Cereibacter sphaeroides (Rhodobacter sphaeroides), this protein is Fructose-bisphosphate aldolase 1 (cfxA).